The chain runs to 144 residues: 3-hydroxyacyl-[acyl-carrier-protein] dehydratase FabZ (144 aa).

Histidine 51 is a catalytic residue.

This sequence belongs to the thioester dehydratase family. FabZ subfamily.

Its subcellular location is the cytoplasm. It carries out the reaction a (3R)-hydroxyacyl-[ACP] = a (2E)-enoyl-[ACP] + H2O. Functionally, involved in unsaturated fatty acids biosynthesis. Catalyzes the dehydration of short chain beta-hydroxyacyl-ACPs and long chain saturated and unsaturated beta-hydroxyacyl-ACPs. The chain is 3-hydroxyacyl-[acyl-carrier-protein] dehydratase FabZ from Clostridium botulinum (strain Okra / Type B1).